The following is a 148-amino-acid chain: Sec-independent protein translocase protein TatB (148 aa).

Residues 1-21 (MFDIGFWELVVIGIVALVVLG) form a helical membrane-spanning segment.

This sequence belongs to the TatB family. As to quaternary structure, the Tat system comprises two distinct complexes: a TatABC complex, containing multiple copies of TatA, TatB and TatC subunits, and a separate TatA complex, containing only TatA subunits. Substrates initially bind to the TatABC complex, which probably triggers association of the separate TatA complex to form the active translocon.

The protein localises to the cell inner membrane. Part of the twin-arginine translocation (Tat) system that transports large folded proteins containing a characteristic twin-arginine motif in their signal peptide across membranes. Together with TatC, TatB is part of a receptor directly interacting with Tat signal peptides. TatB may form an oligomeric binding site that transiently accommodates folded Tat precursor proteins before their translocation. This Aeromonas salmonicida (strain A449) protein is Sec-independent protein translocase protein TatB.